The chain runs to 258 residues: Small ribosomal subunit protein mS40 (258 aa).

Residues 1 to 35 constitute a mitochondrion transit peptide; it reads MAASILNVLLRRLPGVSPFRGAYGVQVLLQTLCTK. Residue serine 49 is modified to Phosphoserine. The tract at residues 223–258 is disordered; sequence RLREESGPPPELMPEVPLTAPAEASSTEPGAPQSAL.

This sequence belongs to the bacterial ribosomal protein bS18 family. Mitochondrion-specific ribosomal protein mS40 subfamily. Component of the mitochondrial ribosome small subunit (28S) which comprises a 12S rRNA and about 30 distinct proteins.

Its subcellular location is the mitochondrion. In Sus scrofa (Pig), this protein is Small ribosomal subunit protein mS40 (MRPS18B).